Consider the following 428-residue polypeptide: Adenylosuccinate synthetase (428 aa).

Residues 11–17 (GDEGKGK) and 39–41 (GHT) each bind GTP. Residue aspartate 12 is the Proton acceptor of the active site. Mg(2+) is bound by residues aspartate 12 and glycine 39. Residues 12 to 15 (DEGK), 37 to 40 (NAGH), threonine 130, arginine 144, asparagine 226, threonine 241, and arginine 305 each bind IMP. The active-site Proton donor is the histidine 40. 301-307 (VTTGRKR) contacts substrate. GTP-binding positions include arginine 307, 333–335 (KLD), and 415–417 (GTG).

It belongs to the adenylosuccinate synthetase family. Homodimer. Requires Mg(2+) as cofactor.

The protein resides in the cytoplasm. It catalyses the reaction IMP + L-aspartate + GTP = N(6)-(1,2-dicarboxyethyl)-AMP + GDP + phosphate + 2 H(+). It participates in purine metabolism; AMP biosynthesis via de novo pathway; AMP from IMP: step 1/2. Functionally, plays an important role in the de novo pathway and in the salvage pathway of purine nucleotide biosynthesis. Catalyzes the first committed step in the biosynthesis of AMP from IMP. This is Adenylosuccinate synthetase from Candida tropicalis (strain ATCC MYA-3404 / T1) (Yeast).